Reading from the N-terminus, the 60-residue chain is Protein translocase subunit SecE (60 aa).

Over 1 to 31 (MFARLIRYFQEARAELARVTWPTREQVVEGT) the chain is Cytoplasmic. Residues 32 to 52 (QAILLFTLAFMVILGLYDTVF) form a helical membrane-spanning segment. Over 53 to 60 (RFLIGLLR) the chain is Extracellular.

This sequence belongs to the SecE/SEC61-gamma family. In terms of assembly, component of the Sec protein translocase complex. Heterotrimer consisting of SecY, SecE and SecG subunits. The heterotrimers can form oligomers, although 1 heterotrimer is thought to be able to translocate proteins. Interacts with SecDF, and other proteins may be involved. The channel interacts with SecA via subunit SecY.

It localises to the cell inner membrane. Its function is as follows. Essential subunit of the protein translocation channel SecYEG. Clamps together the 2 halves of SecY. May contact the channel plug during translocation. This is Protein translocase subunit SecE from Thermus thermophilus (strain ATCC 27634 / DSM 579 / HB8).